The primary structure comprises 314 residues: Endolytic peptidoglycan transglycosylase RlpA (314 aa).

Positions 1–19 are cleaved as a signal peptide; sequence MGWALKKVCFLGVIFLISA. Residue Cys-20 is the site of N-palmitoyl cysteine attachment. A lipid anchor (S-diacylglycerol cysteine) is attached at Cys-20. One can recognise an SPOR domain in the interval 241–314; it reads SVSGGKFSLQ…YNQNAVLTRE (74 aa).

Belongs to the RlpA family.

It is found in the cell membrane. In terms of biological role, lytic transglycosylase with a strong preference for naked glycan strands that lack stem peptides. In Helicobacter pylori (strain J99 / ATCC 700824) (Campylobacter pylori J99), this protein is Endolytic peptidoglycan transglycosylase RlpA.